The following is a 325-amino-acid chain: Tetraacyldisaccharide 4'-kinase (325 aa).

58–65 (TVGGSGKT) serves as a coordination point for ATP.

The protein belongs to the LpxK family.

The enzyme catalyses a lipid A disaccharide + ATP = a lipid IVA + ADP + H(+). It functions in the pathway glycolipid biosynthesis; lipid IV(A) biosynthesis; lipid IV(A) from (3R)-3-hydroxytetradecanoyl-[acyl-carrier-protein] and UDP-N-acetyl-alpha-D-glucosamine: step 6/6. Functionally, transfers the gamma-phosphate of ATP to the 4'-position of a tetraacyldisaccharide 1-phosphate intermediate (termed DS-1-P) to form tetraacyldisaccharide 1,4'-bis-phosphate (lipid IVA). This is Tetraacyldisaccharide 4'-kinase from Coxiella burnetii (strain Dugway 5J108-111).